The sequence spans 419 residues: Tyrosine--tRNA ligase (419 aa).

Residue Y34 participates in L-tyrosine binding. A 'HIGH' region motif is present at residues 39–48; sequence PTADSLHLGN. Residues Y169 and Q173 each coordinate L-tyrosine. The 'KMSKS' region motif lies at 229 to 233; that stretch reads KFGKS. K232 contacts ATP. The 67-residue stretch at 353–419 folds into the S4 RNA-binding domain; sequence LTLIELLISA…GKKKNFVLTY (67 aa).

Belongs to the class-I aminoacyl-tRNA synthetase family. TyrS type 1 subfamily. Homodimer.

Its subcellular location is the cytoplasm. The catalysed reaction is tRNA(Tyr) + L-tyrosine + ATP = L-tyrosyl-tRNA(Tyr) + AMP + diphosphate + H(+). Functionally, catalyzes the attachment of tyrosine to tRNA(Tyr) in a two-step reaction: tyrosine is first activated by ATP to form Tyr-AMP and then transferred to the acceptor end of tRNA(Tyr). This Lactococcus lactis subsp. cremoris (strain SK11) protein is Tyrosine--tRNA ligase.